Here is a 289-residue protein sequence, read N- to C-terminus: ATP synthase gamma chain (289 aa).

The protein belongs to the ATPase gamma chain family. F-type ATPases have 2 components, CF(1) - the catalytic core - and CF(0) - the membrane proton channel. CF(1) has five subunits: alpha(3), beta(3), gamma(1), delta(1), epsilon(1). CF(0) has three main subunits: a, b and c.

It localises to the cell inner membrane. Its function is as follows. Produces ATP from ADP in the presence of a proton gradient across the membrane. The gamma chain is believed to be important in regulating ATPase activity and the flow of protons through the CF(0) complex. This chain is ATP synthase gamma chain, found in Haemophilus influenzae (strain PittEE).